The sequence spans 184 residues: Peptidoglycan-recognition protein SC2 (184 aa).

The first 20 residues, 1 to 20 (MANKALILLAVLFCAQAVLG), serve as a signal peptide directing secretion. Positions 45–169 (SYAVIHHTAG…RQVGSTECPG (125 aa)) constitute an N-acetylmuramoyl-L-alanine amidase domain. His-50 is a binding site for Zn(2+). An intrachain disulfide couples Cys-57 to Cys-63. Residues His-159 and Cys-167 each coordinate Zn(2+).

The protein belongs to the N-acetylmuramoyl-L-alanine amidase 2 family. Zn(2+) is required as a cofactor.

It is found in the secreted. The enzyme catalyses Hydrolyzes the link between N-acetylmuramoyl residues and L-amino acid residues in certain cell-wall glycopeptides.. Functionally, N-acetylmuramyl-L-alanine amidase involved in innate immunity by degrading bacterial peptidoglycans (PGN). Probably plays a scavenger role by digesting biologically active PGN into biologically inactive fragments. Has no direct bacteriolytic activity. The protein is Peptidoglycan-recognition protein SC2 (PGRP-SC2) of Drosophila simulans (Fruit fly).